The following is a 264-amino-acid chain: Phosphonoacetaldehyde hydrolase (264 aa).

Residue Asp9 is the Nucleophile of the active site. Asp9 and Ala11 together coordinate Mg(2+). Lys50 (schiff-base intermediate with substrate) is an active-site residue. Position 183 (Asp183) interacts with Mg(2+).

It belongs to the HAD-like hydrolase superfamily. PhnX family. Homodimer. It depends on Mg(2+) as a cofactor.

The catalysed reaction is phosphonoacetaldehyde + H2O = acetaldehyde + phosphate + H(+). Its function is as follows. Involved in phosphonate degradation. In Bacillus cytotoxicus (strain DSM 22905 / CIP 110041 / 391-98 / NVH 391-98), this protein is Phosphonoacetaldehyde hydrolase.